We begin with the raw amino-acid sequence, 578 residues long: Proline--tRNA ligase (578 aa).

This sequence belongs to the class-II aminoacyl-tRNA synthetase family. ProS type 1 subfamily. Homodimer.

The protein resides in the cytoplasm. The catalysed reaction is tRNA(Pro) + L-proline + ATP = L-prolyl-tRNA(Pro) + AMP + diphosphate. Functionally, catalyzes the attachment of proline to tRNA(Pro) in a two-step reaction: proline is first activated by ATP to form Pro-AMP and then transferred to the acceptor end of tRNA(Pro). As ProRS can inadvertently accommodate and process non-cognate amino acids such as alanine and cysteine, to avoid such errors it has two additional distinct editing activities against alanine. One activity is designated as 'pretransfer' editing and involves the tRNA(Pro)-independent hydrolysis of activated Ala-AMP. The other activity is designated 'posttransfer' editing and involves deacylation of mischarged Ala-tRNA(Pro). The misacylated Cys-tRNA(Pro) is not edited by ProRS. The polypeptide is Proline--tRNA ligase (Paraburkholderia phymatum (strain DSM 17167 / CIP 108236 / LMG 21445 / STM815) (Burkholderia phymatum)).